The sequence spans 282 residues: Light-independent protochlorophyllide reductase iron-sulfur ATP-binding protein (282 aa).

Residues 10–15 (GIGKST) and K39 contribute to the ATP site. S14 serves as a coordination point for Mg(2+). [4Fe-4S] cluster-binding residues include C95 and C129. 180–181 (NR) contacts ATP.

The protein belongs to the NifH/BchL/ChlL family. As to quaternary structure, homodimer. Protochlorophyllide reductase is composed of three subunits; ChlL, ChlN and ChlB. It depends on [4Fe-4S] cluster as a cofactor.

It is found in the plastid. The protein resides in the cyanelle. It catalyses the reaction chlorophyllide a + oxidized 2[4Fe-4S]-[ferredoxin] + 2 ADP + 2 phosphate = protochlorophyllide a + reduced 2[4Fe-4S]-[ferredoxin] + 2 ATP + 2 H2O. It functions in the pathway porphyrin-containing compound metabolism; chlorophyll biosynthesis (light-independent). In terms of biological role, component of the dark-operative protochlorophyllide reductase (DPOR) that uses Mg-ATP and reduced ferredoxin to reduce ring D of protochlorophyllide (Pchlide) to form chlorophyllide a (Chlide). This reaction is light-independent. The L component serves as a unique electron donor to the NB-component of the complex, and binds Mg-ATP. This Cyanophora paradoxa protein is Light-independent protochlorophyllide reductase iron-sulfur ATP-binding protein.